The sequence spans 167 residues: Small ribosomal subunit protein uS5 (167 aa).

The S5 DRBM domain occupies 12–75 (LEERVVTINR…EDAKKNMVLV (64 aa)).

This sequence belongs to the universal ribosomal protein uS5 family. Part of the 30S ribosomal subunit. Contacts proteins S4 and S8.

In terms of biological role, with S4 and S12 plays an important role in translational accuracy. Its function is as follows. Located at the back of the 30S subunit body where it stabilizes the conformation of the head with respect to the body. The polypeptide is Small ribosomal subunit protein uS5 (Listeria monocytogenes serotype 4b (strain F2365)).